The primary structure comprises 418 residues: Nuclear receptor coactivator 6 (418 aa).

2 disordered regions span residues 1-21 (EQIM…QNQS) and 77-98 (PPGP…ANND). The tract at residues 1 to 215 (EQIMTNQMQG…PPRKKKNCHQ (215 aa)) is TBP/GTF2A-binding region. The tract at residues 1–352 (EQIMTNQMQG…LPVSQNVHPP (352 aa)) is CREBBP-binding region. The NCOA1-binding region stretch occupies residues 1–418 (EQIMTNQMQG…YQESPQNSSS (418 aa)). Residues 60–214 (VSNSPSQVMG…KPPRKKKNCH (155 aa)) form an NCOA6IP-binding region region. Residues 84–98 (MAQQHTDPATTANND) are compositionally biased toward polar residues. S171 is subject to Phosphoserine. An LXXLL motif motif is present at residues 174–178 (LVNLL). The tract at residues 186-418 (HFGVNNKQNN…YQESPQNSSS (233 aa)) is disordered. Low complexity predominate over residues 190-199 (NNKQNNTNAN). Over residues 200–212 (KQKKKKPPRKKKN) the composition is skewed to basic residues. Residues 269-279 (PLQQMPPQLMQ) are compositionally biased toward low complexity. Residues 282 to 310 (APPPQPPQQQPQPQLPQQQPQPQPPPPSQ) are compositionally biased toward pro residues. Positions 311–336 (PQSQQQQQQQQQQQQQQMMMMLMMQQ) are enriched in low complexity. Residues R342 and R353 each carry the asymmetric dimethylarginine modification. Residues 358 to 370 (PDSQRVPMQQSGN) show a composition bias toward polar residues. R391 is modified (asymmetric dimethylarginine). The segment covering 399–418 (PLGSNSRKMVYQESPQNSSS) has biased composition (polar residues).

Monomer and homodimer. Interacts in vitro with the basal transcription factors GTF2A and TBP, suggesting an autonomous transactivation function. Interacts with NCOA1, CRSP3, RBM14, the histone acetyltransferase proteins EP300 and CREBBP, and with methyltransferase proteins NCOA6IP and PRMT2. Component of the MLL2/3 complex (also named ASCOM complex), at least composed of KMT2D/MLL2 or KMT2C/MLL3, ASH2L, RBBP5, WDR5, NCOA6, DPY30, KDM6A, PAXIP1/PTIP, PAGR1 and alpha- and beta-tubulin. Interacts with ZNF335; may enhance ligand-dependent transcriptional activation by nuclear hormone receptors. Phosphorylated.

It is found in the nucleus. In terms of biological role, nuclear receptor coactivator that directly binds nuclear receptors and stimulates the transcriptional activities in a hormone-dependent fashion. Coactivate expression in an agonist- and AF2-dependent manner. May coactivate expression via a remodeling of chromatin and its interaction with histone acetyltransferase proteins. Involved in the coactivation of different nuclear receptors, such as for steroids (GR and ERs), retinoids (RARs and RXRs), thyroid hormone (TRs), vitamin D3 (VDR) and prostanoids (PPARs). Probably functions as a general coactivator, rather than just a nuclear receptor coactivator. May also be involved in the coactivation of the NF-kappa-B pathway. The chain is Nuclear receptor coactivator 6 (Ncoa6) from Rattus norvegicus (Rat).